Consider the following 229-residue polypeptide: Vitellogenin (229 aa).

The VWFD domain occupies 1–136 (IVMLKNDNVE…SWILAAESCR (136 aa)). A glycan (N-linked (GlcNAc...) asparagine) is linked at asparagine 198.

Expressed in liver, ovary and, to a lesser extent, in muscle, intestine, skin, kidney and heart.

Functionally, precursor of the egg-yolk proteins that are sources of nutrients during early development of oviparous organisms. Its function is as follows. Probably binds tetrodotoxin in the ovary. The chain is Vitellogenin from Takifugu pardalis (Panther puffer).